A 653-amino-acid chain; its full sequence is Chaperone protein DnaK (653 aa).

Phosphothreonine; by autocatalysis is present on Thr198. A compositionally biased stretch (low complexity) spans 608 to 617; it reads DPEAAAHAAG. The interval 608-653 is disordered; it reads DPEAAAHAAGMHGGAATGGGDGANKHGKGAEDVVEAEFEEVNDDKK. Gly residues predominate over residues 618-629; that stretch reads MHGGAATGGGDG. Acidic residues predominate over residues 639-653; the sequence is DVVEAEFEEVNDDKK.

It belongs to the heat shock protein 70 family.

Acts as a chaperone. In Magnetococcus marinus (strain ATCC BAA-1437 / JCM 17883 / MC-1), this protein is Chaperone protein DnaK.